A 312-amino-acid chain; its full sequence is Methionyl-tRNA formyltransferase (312 aa).

Residues 34–54 (PDAASGRRGKPQPSPVAREAA) form a disordered region. Position 110–113 (110–113 (SLLP)) interacts with (6S)-5,6,7,8-tetrahydrofolate.

Belongs to the Fmt family.

It catalyses the reaction L-methionyl-tRNA(fMet) + (6R)-10-formyltetrahydrofolate = N-formyl-L-methionyl-tRNA(fMet) + (6S)-5,6,7,8-tetrahydrofolate + H(+). Attaches a formyl group to the free amino group of methionyl-tRNA(fMet). The formyl group appears to play a dual role in the initiator identity of N-formylmethionyl-tRNA by promoting its recognition by IF2 and preventing the misappropriation of this tRNA by the elongation apparatus. The polypeptide is Methionyl-tRNA formyltransferase (Mycobacterium tuberculosis (strain ATCC 25177 / H37Ra)).